Here is a 96-residue protein sequence, read N- to C-terminus: Maintenance of carboxysome distribution protein B (96 aa).

A compositionally biased stretch (basic and acidic residues) spans Met-1–Asp-18. Residues Met-1–Asp-96 form a disordered region. A compositionally biased stretch (low complexity) spans Ala-59–Pro-74.

As to quaternary structure, monomer, associates with McdA:DNA. Interacts with shell components of the carboxysome.

It localises to the carboxysome. In terms of biological role, mcdA and McdB together mediate carboxysome positioning on the nucleoid and to prevent their aggregation in the cell. Undergoes liquid-liquid phase separation at pH 7.0 in the presence of crowders polyethylene glycol or Ficoll. McdA is an ATPase that forms dynamic gradients on the nucleoid in response to adapter protein McdB, which associates with carboxysomes. The interplay between McdA gradients on the nucleoid and McdB-bound carboxysomes result in the equal spacing of Cbs along the cell length. Stimulates the ATPase activity of McdA, causing McdA to be released from DNA. Incorrect positioning (aggregation) of carboxysomes results in reduced CO(2) fixation by encapsulated form 1 ribulose-1,5-bisphosphate carboxylase (RuBisCO, cbbL/cbbS), which leads to slower growth. The polypeptide is Maintenance of carboxysome distribution protein B (Halothiobacillus neapolitanus (strain ATCC 23641 / c2) (Thiobacillus neapolitanus)).